A 525-amino-acid polypeptide reads, in one-letter code: Retinoblastoma-binding-like protein E (525 aa).

WD repeat units follow at residues 25-66, 69-108, 222-261, 267-312, and 313-352; these read PKNI…IVRT, HHTG…ILYS, SSNT…LYQQ, DSVN…KDLE, and GPKE…NWSS. Disordered regions lie at residues 371–398 and 462–525; these read DEFD…RNPY and EKYQ…KKRK. A compositionally biased stretch (low complexity) spans 383–392; that stretch reads QEVNNNNNNN. Residues 462-471 are compositionally biased toward basic and acidic residues; the sequence is EKYQKDKEDS. Positions 472–500 are enriched in low complexity; sequence SSTTSNSTISSSSSPSPSSSSTTTTTTTS. Residues 501–525 are compositionally biased toward basic and acidic residues; it reads QKKDETQKKEKSTKKERNSDSKKRK.

The protein localises to the nucleus. Its function is as follows. Involved in mono-, di- and trimethylation at 'Lys-4' of histone H3. Histone H3 'Lys-4' methylation represents a specific tag for epigenetic transcriptional activation. This chain is Retinoblastoma-binding-like protein E, found in Dictyostelium discoideum (Social amoeba).